Consider the following 578-residue polypeptide: CTP synthase 2 (578 aa).

One can recognise a Glutamine amidotransferase type-1 domain in the interval 305–564 (KIALVGKYTN…VAAASGTLGD (260 aa)). Catalysis depends on for GATase activity residues cysteine 404, histidine 537, and glutamate 539.

It belongs to the CTP synthase family. Homodimer. Oligomerizes to a tetramer in the presence of its substrates UTP and ATP. Mg(2+) is required as a cofactor.

It is found in the cytoplasm. It carries out the reaction UTP + L-glutamine + ATP + H2O = CTP + L-glutamate + ADP + phosphate + 2 H(+). It participates in pyrimidine metabolism; CTP biosynthesis via de novo pathway; CTP from UDP: step 2/2. With respect to regulation, activated by GTP. Subject to allosteric product inhibition by CTP. Inhibited by p-chloromercuriphenylsulfonic acid, N-ethylmaleimide and cyclopentenylcytosine (CPEC). Its function is as follows. Catalyzes the ATP-dependent amination of UTP to CTP with either L-glutamine or ammonia as the source of nitrogen. Plays an important role in the regulation of phospholipid synthesis. The sequence is that of CTP synthase 2 (URA8) from Saccharomyces cerevisiae (strain YJM789) (Baker's yeast).